Reading from the N-terminus, the 373-residue chain is UDP-N-acetylglucosamine--N-acetylmuramyl-(pentapeptide) pyrophosphoryl-undecaprenol N-acetylglucosamine transferase (373 aa).

Residues 15–17 (TGG), N126, R170, S198, and Q300 contribute to the UDP-N-acetyl-alpha-D-glucosamine site.

Belongs to the glycosyltransferase 28 family. MurG subfamily.

It is found in the cell inner membrane. It catalyses the reaction di-trans,octa-cis-undecaprenyl diphospho-N-acetyl-alpha-D-muramoyl-L-alanyl-D-glutamyl-meso-2,6-diaminopimeloyl-D-alanyl-D-alanine + UDP-N-acetyl-alpha-D-glucosamine = di-trans,octa-cis-undecaprenyl diphospho-[N-acetyl-alpha-D-glucosaminyl-(1-&gt;4)]-N-acetyl-alpha-D-muramoyl-L-alanyl-D-glutamyl-meso-2,6-diaminopimeloyl-D-alanyl-D-alanine + UDP + H(+). The protein operates within cell wall biogenesis; peptidoglycan biosynthesis. Its function is as follows. Cell wall formation. Catalyzes the transfer of a GlcNAc subunit on undecaprenyl-pyrophosphoryl-MurNAc-pentapeptide (lipid intermediate I) to form undecaprenyl-pyrophosphoryl-MurNAc-(pentapeptide)GlcNAc (lipid intermediate II). The sequence is that of UDP-N-acetylglucosamine--N-acetylmuramyl-(pentapeptide) pyrophosphoryl-undecaprenol N-acetylglucosamine transferase from Methylobacterium nodulans (strain LMG 21967 / CNCM I-2342 / ORS 2060).